A 588-amino-acid polypeptide reads, in one-letter code: Urease subunit alpha (588 aa).

The Urease domain maps to 149–588 (GGIDTHIHFI…LPMAQRYFLF (440 aa)). Ni(2+)-binding residues include His154, His156, and Lys237. Lys237 bears the N6-carboxylysine mark. His239 contributes to the substrate binding site. 2 residues coordinate Ni(2+): His266 and His292. The active-site Proton donor is the His340. Asp380 lines the Ni(2+) pocket.

Belongs to the metallo-dependent hydrolases superfamily. Urease alpha subunit family. As to quaternary structure, heterotrimer of UreA (gamma), UreB (beta) and UreC (alpha) subunits. Three heterotrimers associate to form the active enzyme. It depends on Ni cation as a cofactor. Carboxylation allows a single lysine to coordinate two nickel ions.

It is found in the cytoplasm. The catalysed reaction is urea + 2 H2O + H(+) = hydrogencarbonate + 2 NH4(+). It participates in nitrogen metabolism; urea degradation; CO(2) and NH(3) from urea (urease route): step 1/1. This Opitutus terrae (strain DSM 11246 / JCM 15787 / PB90-1) protein is Urease subunit alpha.